Consider the following 523-residue polypeptide: Sodium-dependent lysophosphatidylcholine symporter 1-B (523 aa).

Residues 1–34 (MAKGEGAEQYTNTSLLQKPSPDEVKLAKHETKSR) lie on the Cytoplasmic side of the membrane. The helical transmembrane segment at 35–64 (LSVCSKLCYAIGGAPYQITGCAIGFFLQIY) threads the bilayer. Residues 65-75 (LLDVALLDPFY) are Extracellular-facing. The chain crosses the membrane as a helical span at residues 76-96 (ASIILFVGRAWDAVTDPTVGF). Topologically, residues 97–108 (LVSRTPWTRFGR) are cytoplasmic. A helical membrane pass occupies residues 109–128 (MMPWIVLSTPFAVLCYFLIW). Over 129–138 (YVPSVDQGKV) the chain is Extracellular. Residues 139-163 (VWYLIFYCCFQTLQTCFHVPYSALT) form a helical membrane-spanning segment. The Cytoplasmic segment spans residues 164-170 (MFISTEQ). Residues 171–202 (KERDSATAYRMTVEVLGTLIGTAIQGQIVGMA) traverse the membrane as a helical segment. At 203–226 (NAPCISTEIDLNSTGLEVAPDVNI) the chain is on the extracellular side. A disulfide bridge connects residues C206 and C457. N-linked (GlcNAc...) asparagine glycans are attached at residues N214 and N225. The chain crosses the membrane as a helical span at residues 227–260 (TDPHVSLQDLRNAYMIASGVICAIYVVCAVVLFL). Residues 261–290 (GVKEQKDTCRVRTEPMSFFQGICMVMGHGP) lie on the Cytoplasmic side of the membrane. The chain crosses the membrane as a helical span at residues 291–317 (YAKLVMGFLFTSLAFMLLEGNFALFCI). The Extracellular segment spans residues 318–328 (YNLGFRNDFQN). The helical transmembrane segment at 329–347 (VLLVIMLSATLAIPFWQWF) threads the bilayer. Over 348–351 (LTKF) the chain is Cytoplasmic. The chain crosses the membrane as a helical span at residues 352–373 (GKKTAVYIGTTSVVPFLISVVL). At 374–376 (VPS) the chain is on the extracellular side. The chain crosses the membrane as a helical span at residues 377–413 (SLAVTYIASFAAGVSVAAAFLLPWSMLPDVVDDFKVQ). The Cytoplasmic segment spans residues 414–423 (NPESQGHEAI). The chain crosses the membrane as a helical span at residues 424–450 (FYSFYVFFTKFASGVSLGVSTLSLDFA). Topologically, residues 451 to 462 (GYVTRGCTQPGE) are extracellular. Residues 463 to 486 (VKLTLKILVSAAPIVLIIIGLLIF) form a helical membrane-spanning segment. Topologically, residues 487-523 (ISYPINEEKRQGNRKLLNEQRENEMDSETDSTELNVV) are cytoplasmic. The interval 504 to 523 (NEQRENEMDSETDSTELNVV) is disordered.

Belongs to the major facilitator superfamily. As to expression, expressed in the developing nervous system.

It is found in the cell membrane. The protein resides in the endoplasmic reticulum membrane. It carries out the reaction a 1-acyl-sn-glycero-3-phosphocholine(in) + Na(+)(in) = a 1-acyl-sn-glycero-3-phosphocholine(out) + Na(+)(out). It catalyses the reaction 1-(4Z,7Z,10Z,13Z,16Z,19Z-docosahexaenoyl)-sn-glycero-3-phosphocholine(in) + Na(+)(in) = 1-(4Z,7Z,10Z,13Z,16Z,19Z-docosahexaenoyl)-sn-glycero-3-phosphocholine(out) + Na(+)(out). The catalysed reaction is 1-(9Z-octadecenoyl)-sn-glycero-3-phosphocholine(in) + Na(+)(in) = 1-(9Z-octadecenoyl)-sn-glycero-3-phosphocholine(out) + Na(+)(out). The enzyme catalyses 1-hexadecanoyl-sn-glycero-3-phosphocholine(in) + Na(+)(in) = 1-hexadecanoyl-sn-glycero-3-phosphocholine(out) + Na(+)(out). It carries out the reaction a 1-acyl-sn-glycero-3-phosphoethanolamine(in) + Na(+)(in) = a 1-acyl-sn-glycero-3-phosphoethanolamine(out) + Na(+)(out). Sodium-dependent lysophosphatidylcholine (LPC) symporter, which plays an essential role for blood-brain barrier formation and function. Specifically expressed in endothelium of the blood-brain barrier of micro-vessels and transports LPC into the brain. Transport of LPC is essential because it constitutes the major mechanism by which docosahexaenoic acid (DHA), an omega-3 fatty acid that is essential for normal brain growth and cognitive function, enters the brain. Transports LPC carrying long-chain fatty acids such LPC oleate and LPC palmitate with a minimum acyl chain length of 14 carbons. Does not transport docosahexaenoic acid in unesterified fatty acid. The sequence is that of Sodium-dependent lysophosphatidylcholine symporter 1-B (mfsd2ab) from Danio rerio (Zebrafish).